Here is a 279-residue protein sequence, read N- to C-terminus: Movement protein (279 aa).

Residues 246–279 form a disordered region; the sequence is SESEELNVESPPAAIGSSSASRSEAFRPQVVNGL. Residues 254–268 are compositionally biased toward low complexity; sequence ESPPAAIGSSSASRS.

This sequence belongs to the cucumovirus movement protein family.

The protein localises to the host cell junction. It is found in the host plasmodesma. Functionally, transports viral genome to neighboring plant cells directly through plasmosdesmata, without any budding. The movement protein allows efficient cell to cell propagation, by bypassing the host cell wall barrier. Acts by forming a tubular structure at the host plasmodesmata, enlarging it enough to allow free passage of virion capsids. The polypeptide is Movement protein (Cucumber mosaic virus (strain N) (CMV)).